The sequence spans 432 residues: Glutamyl-tRNA reductase (432 aa).

Substrate-binding positions include T49–R52, S101, E106–Q108, and Q112. The active-site Nucleophile is C50. Residue G181–I186 coordinates NADP(+). The segment at P408–P432 is disordered.

The protein belongs to the glutamyl-tRNA reductase family. As to quaternary structure, homodimer.

The catalysed reaction is (S)-4-amino-5-oxopentanoate + tRNA(Glu) + NADP(+) = L-glutamyl-tRNA(Glu) + NADPH + H(+). It participates in porphyrin-containing compound metabolism; protoporphyrin-IX biosynthesis; 5-aminolevulinate from L-glutamyl-tRNA(Glu): step 1/2. In terms of biological role, catalyzes the NADPH-dependent reduction of glutamyl-tRNA(Glu) to glutamate 1-semialdehyde (GSA). The chain is Glutamyl-tRNA reductase from Xanthomonas campestris pv. campestris (strain 8004).